An 841-amino-acid chain; its full sequence is Probable outer membrane usher protein EcpC (841 aa).

The N-terminal stretch at 1–29 (MPLRRFSPGLKAQFAFGMVFLFVQPDASA) is a signal peptide.

It belongs to the EcpC/MatD family.

Part of the ecpRABCDE operon, which encodes the E.coli common pilus (ECP). ECP is found in both commensal and pathogenic strains and plays a dual role in early-stage biofilm development and host cell recognition. The protein is Probable outer membrane usher protein EcpC (ecpC) of Escherichia coli O127:H6 (strain E2348/69 / EPEC).